The following is a 265-amino-acid chain: Dehydrogenase RED2 (265 aa).

Residues 6–26 traverse the membrane as a helical segment; the sequence is SFLLSKLFLCIALCTAYVAFS. A glycan (N-linked (GlcNAc...) asparagine) is linked at Asn-45. Residues 47–67 form a helical membrane-spanning segment; it reads TSTVFGLTIVAIGLSALSSWL. Asn-74 carries N-linked (GlcNAc...) asparagine glycosylation. Residue Val-89 participates in NADP(+) binding. N-linked (GlcNAc...) asparagine glycosylation is present at Asn-127. Asp-136 and Asn-163 together coordinate NADP(+). The N-linked (GlcNAc...) asparagine glycan is linked to Asn-176. Catalysis depends on Ser-216, which acts as the Proton donor. Residues Tyr-228 and Lys-232 each coordinate NADP(+). The Proton acceptor role is filled by Tyr-228. The Lowers pKa of active site Tyr role is filled by Lys-232.

It belongs to the short-chain dehydrogenases/reductases (SDR) family.

Its subcellular location is the membrane. The catalysed reaction is a primary alcohol + NAD(+) = an aldehyde + NADH + H(+). The enzyme catalyses a secondary alcohol + NAD(+) = a ketone + NADH + H(+). Its pathway is mycotoxin biosynthesis. Its function is as follows. Dehydrogenase; part of the Tox1B locus, one of the 2 loci that mediate the biosynthesis of T-toxin, a family of linear polyketides 37 to 45 carbons in length, of which the major component is 41 carbons, and which leads to high virulence to maize. One of the PKSs (PKS1 or PKS2) could synthesize a precursor, used subsequently by the other PKS as starter unit, to add additional carbons. Variability in the length of the final carbon backbone C35-47 could be achieved by varying the number of condensation cycles, or use of different starter or extender units or might be due to decarboxylation of the penultimate product, catalyzed by DEC1. Additional proteins are required for the biosynthesis of T-toxin, including oxidoreductases RED1, RED2, RED3, LAM1 and OXI1, as well as esterase TOX9. The protein is Dehydrogenase RED2 of Cochliobolus heterostrophus (strain C4 / ATCC 48331 / race T) (Southern corn leaf blight fungus).